The primary structure comprises 209 residues: Ribose 1,5-bisphosphate phosphokinase PhnN (209 aa).

27–34 (GPSGGGKD) provides a ligand contact to ATP.

The protein belongs to the ribose 1,5-bisphosphokinase family.

The catalysed reaction is alpha-D-ribose 1,5-bisphosphate + ATP = 5-phospho-alpha-D-ribose 1-diphosphate + ADP. The protein operates within metabolic intermediate biosynthesis; 5-phospho-alpha-D-ribose 1-diphosphate biosynthesis; 5-phospho-alpha-D-ribose 1-diphosphate from D-ribose 5-phosphate (route II): step 3/3. In terms of biological role, catalyzes the phosphorylation of ribose 1,5-bisphosphate to 5-phospho-D-ribosyl alpha-1-diphosphate (PRPP). The polypeptide is Ribose 1,5-bisphosphate phosphokinase PhnN (Chelativorans sp. (strain BNC1)).